Reading from the N-terminus, the 238-residue chain is Protein shisa-3 homolog (238 aa).

An N-terminal signal peptide occupies residues 1 to 21; it reads MGALLAFCLLVGLLRWGPAGA. At 22–98 the chain is on the lumenal side; sequence QQPGEYCHGW…GITAQPVYVP (77 aa). A helical transmembrane segment spans residues 99–119; the sequence is FLIVGSIFIAFIILGSLVAIY. The Cytoplasmic segment spans residues 120 to 238; sequence CCTCLRPKEP…GKSCPDFSSS (119 aa).

Belongs to the shisa family.

It localises to the endoplasmic reticulum membrane. In terms of biological role, plays an essential role in the maturation of presomitic mesoderm cells by individual attenuation of both FGF and WNT signaling. In Mus musculus (Mouse), this protein is Protein shisa-3 homolog (Shisa3).